The chain runs to 173 residues: Putative phosphoesterase GWCH70_0799 (173 aa).

The active-site Proton donor is H34. Short sequence motifs (HXTX) lie at residues 34–37 and 115–118; these read HLTL and HITI. H115 functions as the Proton acceptor in the catalytic mechanism.

It belongs to the 2H phosphoesterase superfamily. YjcG family.

The polypeptide is Putative phosphoesterase GWCH70_0799 (Geobacillus sp. (strain WCH70)).